The following is an 817-amino-acid chain: Myosin-A (817 aa).

S19 is subject to Phosphoserine. The 675-residue stretch at 97–771 folds into the Myosin motor domain; it reads MSFGDIGLLN…GAKMLSKIQR (675 aa). 191 to 198 serves as a coordination point for ATP; the sequence is GESGAGKT. Positions 661-671 are actin-binding; it reads PHFIRCIKPNE. Residues 773–817 form a tail region; sequence KLVEWENCVSVIEAAIMKYKHKQNVENNVSSLMRVQAHIRKRMVA.

The protein belongs to the TRAFAC class myosin-kinesin ATPase superfamily. Myosin family. Interacts with ACT1.

The protein resides in the cell membrane. Functionally, myosins are actin-based motor molecules with ATPase activity. Unconventional myosins serve in intracellular movements. Their highly divergent tails are presumed to bind to membranous compartments, which would be moved relative to actin filaments. The sequence is that of Myosin-A from Plasmodium yoelii yoelii.